The sequence spans 360 residues: Peptide chain release factor 1 (360 aa).

Glutamine 235 carries the N5-methylglutamine modification. Positions 284-293 (HKRQQEEAST) are enriched in basic and acidic residues. The segment at 284-305 (HKRQQEEASTRRNLLGSGDRSD) is disordered.

It belongs to the prokaryotic/mitochondrial release factor family. Methylated by PrmC. Methylation increases the termination efficiency of RF1.

It is found in the cytoplasm. Its function is as follows. Peptide chain release factor 1 directs the termination of translation in response to the peptide chain termination codons UAG and UAA. This Pectobacterium atrosepticum (strain SCRI 1043 / ATCC BAA-672) (Erwinia carotovora subsp. atroseptica) protein is Peptide chain release factor 1.